We begin with the raw amino-acid sequence, 921 residues long: Isoleucine--tRNA ligase (921 aa).

The short motif at 57-67 (PYANGDIHMGH) is the 'HIGH' region element. L-isoleucyl-5'-AMP is bound at residue E552. A 'KMSKS' region motif is present at residues 593–597 (KMSKS). K596 is an ATP binding site. Positions 888, 891, 908, and 911 each coordinate Zn(2+).

The protein belongs to the class-I aminoacyl-tRNA synthetase family. IleS type 1 subfamily. As to quaternary structure, monomer. Zn(2+) serves as cofactor.

Its subcellular location is the cytoplasm. It catalyses the reaction tRNA(Ile) + L-isoleucine + ATP = L-isoleucyl-tRNA(Ile) + AMP + diphosphate. In terms of biological role, catalyzes the attachment of isoleucine to tRNA(Ile). As IleRS can inadvertently accommodate and process structurally similar amino acids such as valine, to avoid such errors it has two additional distinct tRNA(Ile)-dependent editing activities. One activity is designated as 'pretransfer' editing and involves the hydrolysis of activated Val-AMP. The other activity is designated 'posttransfer' editing and involves deacylation of mischarged Val-tRNA(Ile). This is Isoleucine--tRNA ligase from Bacillus cereus (strain 03BB102).